Here is a 576-residue protein sequence, read N- to C-terminus: Ferroportin (576 aa).

The Cytoplasmic portion of the chain corresponds to 1–23 (MPKAGEQARQGGCCGSLANYLTS). Residues 24–53 (AKFLLYLGHSLSTWGDRMWHFAVSVFLVEL) traverse the membrane as a helical segment. Asp39 and His43 together coordinate Fe cation. Topologically, residues 54 to 57 (YGNS) are extracellular. The helical transmembrane segment at 58-84 (LLLTAVYGLVVAGSVLVLGAIIGDWVD) threads the bilayer. Over 85–87 (KNA) the chain is Cytoplasmic. A helical membrane pass occupies residues 88–118 (RLKVAQTSLVVQNVSVILCGIILMMVFLHKN). Residues 119 to 126 (ELLTMYHG) are Extracellular-facing. A helical membrane pass occupies residues 127–162 (WVLTFCYILIITIADVANLASTATAITIQRDWIVVV). The Cytoplasmic segment spans residues 163 to 164 (AG). A helical transmembrane segment spans residues 165 to 195 (GDRSKLADMNATIRRIDQLTNILAPMAVGQI). Over 196–202 (MTFGSAV) the chain is Extracellular. Residues 203-229 (IGCGFISGWNLVSMCVEYFLLWKVYQK) traverse the membrane as a helical segment. At 230-306 (TPALAVKAAL…DGWVSYYNQS (77 aa)) the chain is on the cytoplasmic side. A helical membrane pass occupies residues 307–333 (VFLAGMGLAFLYMTVLGFDCITTGYAY). Cys326 lines the Fe cation pocket. Topologically, residues 334–338 (TQGLS) are extracellular. Residues 339-366 (GSILSILMGASAITGIMGTVAFTWLRRK) traverse the membrane as a helical segment. At 367–368 (CG) the chain is on the cytoplasmic side. A helical transmembrane segment spans residues 369 to 391 (LVRTGLISGFAQLSCLILCVISV). The Extracellular segment spans residues 392–458 (FMPGSPLDLS…ETTPKSVPII (67 aa)). Asn439 is a glycosylation site (N-linked (GlcNAc...) asparagine). Residues 459 to 488 (SVSLLFAGVIAARIGLWSFDLTVTQLLQEN) form a helical membrane-spanning segment. Residues 489–493 (VIESE) are Cytoplasmic-facing. A helical membrane pass occupies residues 494-518 (RGIINGVQNSMNYLLDLLHFIMVIL). His512 serves as a coordination point for Fe cation. At 519–521 (APN) the chain is on the extracellular side. A helical transmembrane segment spans residues 522-547 (PEAFGLLVLISVSFVAMGHIMYFRFA). Topologically, residues 548–576 (QKTLGSKLFACGADDEEVTNENQANTSVV) are cytoplasmic.

Belongs to the ferroportin (FP) (TC 2.A.100) family. SLC40A subfamily. In terms of assembly, identified in a complex with STOM. Interacts with HAMP; affinity of the peptide hormone HAMP for SLC40A1 increases by 80-fold in the presence of iron and the interaction promotes SLC40A1 ubiquitination and degradation. Part of a complex composed of SLC40A1/ferroportin, TF/transferrin and HEPH/hephaestin that transfers iron from cells to transferrin. In terms of processing, polyubiquitinated by RNF217; leading to proteasomal degradation. Under conditions of high systemic iron levels, both the hormone peptide hepcidin/HAMP and holo(iron bound)-transferrin/TF induce the ubiquitination, internalization and proteasomal degradation of SLC40A1 to control iron release from cells.

Its subcellular location is the cell membrane. It is found in the basolateral cell membrane. It catalyses the reaction Fe(2+)(in) = Fe(2+)(out). During elevated serum iron levels, liver-derived hepcidin/HAMP negatively regulates cell surface ferroportin/SLC40A1 by inducing its ubiquitination, internalization, and degradation. Indeed, hepcidin/HAMP affinity towards ferroportin/SLC40A1 increases by 80-fold in the presence of iron. In terms of biological role, transports Fe(2+) from the inside of a cell to the outside of the cell, playing a key role for maintaining systemic iron homeostasis. Transports iron from intestinal, splenic, hepatic cells, macrophages and erythrocytes into the blood to provide iron to other tissues. Controls therefore dietary iron uptake, iron recycling by macrophages and erythrocytes, and release of iron stores in hepatocytes. When iron is in excess in serum, circulating HAMP/hepcidin levels increase resulting in a degradation of SLC40A1, thus limiting the iron efflux to plasma. This chain is Ferroportin, found in Canis lupus familiaris (Dog).